The sequence spans 427 residues: UPF0229 protein YeaH (427 aa).

The span at 79-90 (NDHFVQNDRIER) shows a compositional bias: basic and acidic residues. Residues 79–110 (NDHFVQNDRIERPQGGGGGSGSGQGQASQDGE) are disordered. The segment covering 92-102 (QGGGGGSGSGQ) has biased composition (gly residues).

This sequence belongs to the UPF0229 family.

The sequence is that of UPF0229 protein YeaH from Escherichia coli (strain K12 / MC4100 / BW2952).